Here is a 230-residue protein sequence, read N- to C-terminus: Orotidine 5'-phosphate decarboxylase (230 aa).

Substrate is bound by residues Asp10, Lys31, 58–67, Thr117, Arg179, Gln188, Gly208, and Arg209; that span reads DLKLHDIPNT. Catalysis depends on Lys60, which acts as the Proton donor.

The protein belongs to the OMP decarboxylase family. Type 1 subfamily. In terms of assembly, homodimer.

It catalyses the reaction orotidine 5'-phosphate + H(+) = UMP + CO2. It participates in pyrimidine metabolism; UMP biosynthesis via de novo pathway; UMP from orotate: step 2/2. Its function is as follows. Catalyzes the decarboxylation of orotidine 5'-monophosphate (OMP) to uridine 5'-monophosphate (UMP). The protein is Orotidine 5'-phosphate decarboxylase of Staphylococcus aureus (strain bovine RF122 / ET3-1).